A 92-amino-acid chain; its full sequence is Cell division protein FtsB (92 aa).

Over 1 to 3 the chain is Cytoplasmic; the sequence is MRL. The chain crosses the membrane as a helical span at residues 4–21; that stretch reads LILILLSVLVLFQHDFWF. Topologically, residues 22–92 are periplasmic; it reads GSNGFLDYRQ…VFYHIVKESK (71 aa). Residues 28–63 adopt a coiled-coil conformation; that stretch reads DYRQNAEKIKENQAENEKLSQRNQRINAEIQGLTKG.

This sequence belongs to the FtsB family. As to quaternary structure, part of a complex composed of FtsB, FtsL and FtsQ.

The protein localises to the cell inner membrane. Essential cell division protein. May link together the upstream cell division proteins, which are predominantly cytoplasmic, with the downstream cell division proteins, which are predominantly periplasmic. This is Cell division protein FtsB from Haemophilus influenzae (strain PittEE).